The chain runs to 130 residues: Large ribosomal subunit protein eL32 (130 aa).

This sequence belongs to the eukaryotic ribosomal protein eL32 family.

The protein is Large ribosomal subunit protein eL32 (rpl32e) of Pyrococcus horikoshii (strain ATCC 700860 / DSM 12428 / JCM 9974 / NBRC 100139 / OT-3).